A 334-amino-acid polypeptide reads, in one-letter code: Glycerol-3-phosphate dehydrogenase [NAD(P)+] (334 aa).

The NADPH site is built by Ser-13, Phe-14, and Lys-108. Residues Lys-108, Gly-137, and Thr-139 each contribute to the sn-glycerol 3-phosphate site. Residue Ala-141 participates in NADPH binding. Sn-glycerol 3-phosphate contacts are provided by Lys-193, Asp-246, Ser-256, Arg-257, and Asn-258. Catalysis depends on Lys-193, which acts as the Proton acceptor. Arg-257 contacts NADPH. NADPH contacts are provided by Val-281 and Glu-283.

The protein belongs to the NAD-dependent glycerol-3-phosphate dehydrogenase family.

The protein resides in the cytoplasm. It carries out the reaction sn-glycerol 3-phosphate + NAD(+) = dihydroxyacetone phosphate + NADH + H(+). It catalyses the reaction sn-glycerol 3-phosphate + NADP(+) = dihydroxyacetone phosphate + NADPH + H(+). Its pathway is membrane lipid metabolism; glycerophospholipid metabolism. Catalyzes the reduction of the glycolytic intermediate dihydroxyacetone phosphate (DHAP) to sn-glycerol 3-phosphate (G3P), the key precursor for phospholipid synthesis. This chain is Glycerol-3-phosphate dehydrogenase [NAD(P)+], found in Bartonella tribocorum (strain CIP 105476 / IBS 506).